The chain runs to 130 residues: Small ribosomal subunit protein uS11 (130 aa).

The protein belongs to the universal ribosomal protein uS11 family. As to quaternary structure, part of the 30S ribosomal subunit. Interacts with proteins S7 and S18. Binds to IF-3.

Located on the platform of the 30S subunit, it bridges several disparate RNA helices of the 16S rRNA. Forms part of the Shine-Dalgarno cleft in the 70S ribosome. In Borreliella afzelii (strain PKo) (Borrelia afzelii), this protein is Small ribosomal subunit protein uS11.